The following is a 292-amino-acid chain: Elongation factor Ts (292 aa).

Residues 81–84 (TDFV) form an involved in Mg(2+) ion dislocation from EF-Tu region.

This sequence belongs to the EF-Ts family.

It localises to the cytoplasm. Its function is as follows. Associates with the EF-Tu.GDP complex and induces the exchange of GDP to GTP. It remains bound to the aminoacyl-tRNA.EF-Tu.GTP complex up to the GTP hydrolysis stage on the ribosome. The chain is Elongation factor Ts from Acidithiobacillus ferrooxidans (strain ATCC 23270 / DSM 14882 / CIP 104768 / NCIMB 8455) (Ferrobacillus ferrooxidans (strain ATCC 23270)).